Here is a 166-residue protein sequence, read N- to C-terminus: uncharacterized protein (166 aa).

A helical transmembrane segment spans residues 34 to 54 (FWGKVLVLTFGIICVVFVIFM). Disordered regions lie at residues 73 to 93 (QRTQ…SQQF) and 123 to 166 (TSTP…NDEV).

The protein resides in the vacuole membrane. This is an uncharacterized protein from Schizosaccharomyces pombe (strain 972 / ATCC 24843) (Fission yeast).